Reading from the N-terminus, the 495-residue chain is Solute carrier family 2, facilitated glucose transporter member 3 (495 aa).

Residues 1-10 (MGTQKVTVSL) are Cytoplasmic-facing. Residues 11–32 (IFALSIATIGSFQFGYNTGVIN) form a helical membrane-spanning segment. The Extracellular portion of the chain corresponds to 33–64 (APETIIKDFLNYTLEEKSENLPTEVLLTSLWS). An N-linked (GlcNAc...) asparagine glycan is attached at Asn43. A helical membrane pass occupies residues 65-85 (LSVAIFSVGGMIGSFSVGLFV). Residues 86–90 (NRFGR) lie on the Cytoplasmic side of the membrane. The chain crosses the membrane as a helical span at residues 91-111 (RNSMLMVNLLAVAGGCLMGFC). At 112–118 (KIAQSVE) the chain is on the extracellular side. A helical transmembrane segment spans residues 119-142 (MLILGRLIIGLFCGLCTGFVPMYI). Over 143 to 153 (GEISPTALRGA) the chain is Cytoplasmic. The helical transmembrane segment at 154–174 (FGTLNQLGIVIGILVAQIFGL) threads the bilayer. Gln159 is a D-glucose binding site. At 175 to 183 (KVIMGTEEL) the chain is on the extracellular side. A helical membrane pass occupies residues 184 to 204 (WPLLLGFTIIPAVLQSAALPF). At 205 to 269 (CPESPRFLLI…LFRSRSYRQP (65 aa)) the chain is on the cytoplasmic side. A Phosphothreonine modification is found at Thr232. A helical membrane pass occupies residues 270 to 290 (IIISIMLQLSQQLSGINAVFY). The segment at 277–279 (QLS) is important for selectivity against fructose. Residues 280–281 (QQ) and Asn286 each bind D-glucose. The Extracellular segment spans residues 291 to 304 (YSTGIFKDAGVEEP). The chain crosses the membrane as a helical span at residues 305-325 (IYATIGAGVVNTIFTVVSLFL). Asn315 is a binding site for D-glucose. Residues 326-331 (VERAGR) are Cytoplasmic-facing. A helical transmembrane segment spans residues 332–352 (RTLHMIGLGGMAVCSILMTIS). At 353-363 (LLLKDNYNWMS) the chain is on the extracellular side. The chain crosses the membrane as a helical span at residues 364–389 (FVCIGAILVFVAFFEIGPGPIPWFIV). Residues Glu378 and Trp386 each coordinate D-glucose. At 390–399 (AELFSQGPRP) the chain is on the cytoplasmic side. The helical transmembrane segment at 400–420 (AAMAVAGCSNWTSNFLVGLLF) threads the bilayer. Over 421-429 (PSAAFYLGA) the chain is Extracellular. A helical transmembrane segment spans residues 430–450 (YVFIIFTGFLIVFLVFTFFKV). Residues 451–495 (PETRGRTFEEITRAFEGQGQDANRAEKGPIVEMNSMQPVKETATV) are Cytoplasmic-facing. Position 485 is a phosphoserine (Ser485). Thr492 is modified (phosphothreonine).

The protein belongs to the major facilitator superfamily. Sugar transporter (TC 2.A.1.1) family. Glucose transporter subfamily. In terms of assembly, interacts with SMIM43; the interaction may promote SLC2A3-mediated glucose transport to meet the energy needs of mesendoderm differentiation.

It localises to the cell membrane. The protein resides in the perikaryon. It is found in the cell projection. The enzyme catalyses D-glucose(out) = D-glucose(in). The catalysed reaction is D-galactose(in) = D-galactose(out). Its activity is regulated as follows. Deoxyglucose transport is inhibited by D-glucose, D-galactose and maltose. Galactose transport is inhibited by D-glucose and maltose. Functionally, facilitative glucose transporter. Can also mediate the uptake of various other monosaccharides across the cell membrane. Mediates the uptake of glucose, 2-deoxyglucose, galactose, mannose, xylose and fucose, and probably also dehydroascorbate. Does not mediate fructose transport. Required for mesendoderm differentiation. This Canis lupus familiaris (Dog) protein is Solute carrier family 2, facilitated glucose transporter member 3.